Consider the following 156-residue polypeptide: Endoribonuclease YbeY (156 aa).

Zn(2+) contacts are provided by His122, His126, and His132.

It belongs to the endoribonuclease YbeY family. Requires Zn(2+) as cofactor.

Its subcellular location is the cytoplasm. Single strand-specific metallo-endoribonuclease involved in late-stage 70S ribosome quality control and in maturation of the 3' terminus of the 16S rRNA. In Geobacillus kaustophilus (strain HTA426), this protein is Endoribonuclease YbeY.